We begin with the raw amino-acid sequence, 188 residues long: Kappa-casein (188 aa).

Positions 1–21 (MMKSSFLIVPILALTLPFLGA) are cleaved as a signal peptide. O-linked (GalNAc...) threonine glycans are attached at residues T143 and T148. Phosphothreonine is present on T163. The residue at position 167 (S167) is a Phosphoserine; alternate. An O-linked (GalNAc...) serine; alternate glycan is attached at S167. T184 is a glycosylation site (O-linked (GalNAc...) threonine). S185 is modified (phosphoserine).

Belongs to the kappa-casein family. In terms of tissue distribution, mammary gland specific. Secreted in milk.

It is found in the secreted. Its function is as follows. Kappa-casein stabilizes micelle formation, preventing casein precipitation in milk. This is Kappa-casein (CSN3) from Sus scrofa (Pig).